The following is a 304-amino-acid chain: Kazal-type serine protease inhibitor domain-containing protein 1 (304 aa).

Positions 1-30 are cleaved as a signal peptide; it reads MLPPPRPAAALALPVLLLLLVVLTPPPTGA. One can recognise an IGFBP N-terminal domain in the interval 49–129; that stretch reads EGEGCAPCRP…EVPEPLCACR (81 aa). 7 disulfides stabilise this stretch: Cys-53-Cys-76, Cys-56-Cys-78, Cys-61-Cys-79, Cys-67-Cys-82, Cys-90-Cys-108, Cys-102-Cys-126, and Cys-135-Cys-168. Residues 120–170 form the Kazal-like domain; it reads EVPEPLCACRSQSPLCGSDGHTYSQICRLQEAARARPDANLTVAHPGPCES. 2 N-linked (GlcNAc...) asparagine glycosylation sites follow: Asn-159 and Asn-183. The Ig-like C2-type domain occupies 172–269; that stretch reads PQIVSHPYDT…GQVEAPASLT (98 aa). Cys-193 and Cys-253 form a disulfide bridge. Asn-277 carries an N-linked (GlcNAc...) asparagine glycan.

Its subcellular location is the secreted. The protein localises to the extracellular space. It is found in the extracellular matrix. Its function is as follows. Involved in the proliferation of osteoblasts during bone formation and bone regeneration. Promotes matrix assembly. The sequence is that of Kazal-type serine protease inhibitor domain-containing protein 1 (KAZALD1) from Homo sapiens (Human).